The primary structure comprises 540 residues: CTP synthase (540 aa).

The tract at residues 1 to 264 (MQYIVVTGGV…ISYLSKLSGK (264 aa)) is amidoligase domain. Position 12 (Ser12) interacts with CTP. Ser12 is a UTP binding site. Residue 13–18 (GLGKGT) coordinates ATP. Tyr53 provides a ligand contact to L-glutamine. Asp70 lines the ATP pocket. Asp70 and Glu140 together coordinate Mg(2+). Residues 147 to 149 (DIE), 185 to 190 (KTKPTQ), and Arg221 contribute to the CTP site. Residues 185 to 190 (KTKPTQ) and Arg221 contribute to the UTP site. A Glutamine amidotransferase type-1 domain is found at 294–527 (YVDLHDAYIS…VQQALIYKKN (234 aa)). Gly347 provides a ligand contact to L-glutamine. The Nucleophile; for glutamine hydrolysis role is filled by Cys374. Residues 375 to 378 (LGFQ), Glu398, and Arg455 contribute to the L-glutamine site. Residues His500 and Glu502 contribute to the active site.

It belongs to the CTP synthase family. As to quaternary structure, homotetramer.

It carries out the reaction UTP + L-glutamine + ATP + H2O = CTP + L-glutamate + ADP + phosphate + 2 H(+). The catalysed reaction is L-glutamine + H2O = L-glutamate + NH4(+). It catalyses the reaction UTP + NH4(+) + ATP = CTP + ADP + phosphate + 2 H(+). The protein operates within pyrimidine metabolism; CTP biosynthesis via de novo pathway; CTP from UDP: step 2/2. With respect to regulation, allosterically activated by GTP, when glutamine is the substrate; GTP has no effect on the reaction when ammonia is the substrate. The allosteric effector GTP functions by stabilizing the protein conformation that binds the tetrahedral intermediate(s) formed during glutamine hydrolysis. Inhibited by the product CTP, via allosteric rather than competitive inhibition. Functionally, catalyzes the ATP-dependent amination of UTP to CTP with either L-glutamine or ammonia as the source of nitrogen. Regulates intracellular CTP levels through interactions with the four ribonucleotide triphosphates. The chain is CTP synthase from Thermoplasma volcanium (strain ATCC 51530 / DSM 4299 / JCM 9571 / NBRC 15438 / GSS1).